The sequence spans 39 residues: Fuctinin-3 (39 aa).

Residues Lys-1–Ala-39 are disordered.

This sequence to human SET/PHAPII protein. In terms of assembly, oligomer.

It localises to the cytoplasm. In terms of biological role, has a role in the physiological regulation of fucosylation processes. The protein is Fuctinin-3 of Rattus norvegicus (Rat).